The primary structure comprises 196 residues: Carnitine operon protein CaiE (196 aa).

The tract at residues 173-196 is disordered; the sequence is TQPLRQMEENRPRLQGTTDVTPKR. Over residues 187-196 the composition is skewed to polar residues; sequence QGTTDVTPKR.

This sequence belongs to the transferase hexapeptide repeat family.

The protein operates within amine and polyamine metabolism; carnitine metabolism. Its function is as follows. Overproduction of CaiE stimulates the activity of CaiB and CaiD. The sequence is that of Carnitine operon protein CaiE from Escherichia coli O6:K15:H31 (strain 536 / UPEC).